A 402-amino-acid polypeptide reads, in one-letter code: Large ribosomal subunit protein uL3 (402 aa).

The disordered stretch occupies residues 1–35 (MSHRKFSAPRHGSMGFTPKKRSKRHRGKVKAFPKD). Positions 18–31 (PKKRSKRHRGKVKA) are enriched in basic residues.

This sequence belongs to the universal ribosomal protein uL3 family.

The protein resides in the cytoplasm. Functionally, the L3 protein is a component of the large subunit of cytoplasmic ribosomes. The chain is Large ribosomal subunit protein uL3 (RPL3) from Toxocara canis (Canine roundworm).